A 39-amino-acid polypeptide reads, in one-letter code: MTIDRTYPIFTVRWLAVHGLAVPTVSFLGSISAMQFIQR.

The helical transmembrane segment at 14–30 (WLAVHGLAVPTVSFLGS) threads the bilayer. Histidine 18 lines the heme pocket.

This sequence belongs to the PsbE/PsbF family. In terms of assembly, heterodimer of an alpha subunit and a beta subunit. PSII is composed of 1 copy each of membrane proteins PsbA, PsbB, PsbC, PsbD, PsbE, PsbF, PsbH, PsbI, PsbJ, PsbK, PsbL, PsbM, PsbT, PsbX, PsbY, PsbZ, Psb30/Ycf12, at least 3 peripheral proteins of the oxygen-evolving complex and a large number of cofactors. It forms dimeric complexes. It depends on heme b as a cofactor.

It is found in the plastid. It localises to the chloroplast thylakoid membrane. Functionally, this b-type cytochrome is tightly associated with the reaction center of photosystem II (PSII). PSII is a light-driven water:plastoquinone oxidoreductase that uses light energy to abstract electrons from H(2)O, generating O(2) and a proton gradient subsequently used for ATP formation. It consists of a core antenna complex that captures photons, and an electron transfer chain that converts photonic excitation into a charge separation. In Muilla maritima (Sea muilla), this protein is Cytochrome b559 subunit beta.